A 345-amino-acid chain; its full sequence is Low-density lipoprotein receptor class A domain-containing protein 3 (345 aa).

An N-terminal signal peptide occupies residues 1–17 (MWLLGPLCLLLSSAAES). Residues 18-173 (QLLPGNNFTN…NQLVYYPSIT (156 aa)) are Extracellular-facing. A glycan (N-linked (GlcNAc...) asparagine) is linked at Asn24. LDL-receptor class A domains lie at 28-65 (ECNIPGNFMCSNGRCIPGAWQCDGLPDCFDKSDEKECP), 70-107 (KCGPTFFPCASGIHCIIGRFRCNGFEDCPDGSDEENCT), and 112-148 (LCSTARYHCKNGLCIDKSFICDGQNNCQDNSDEESCE). 9 disulfide bridges follow: Cys29–Cys42, Cys37–Cys55, Cys49–Cys64, Cys71–Cys84, Cys78–Cys97, Cys91–Cys106, Cys113–Cys125, Cys120–Cys138, and Cys132–Cys147. The segment at 30 to 57 (NIPGNFMCSNGRCIPGAWQCDGLPDCFD) is (Microbial infection) Interaction with Venezuelan equine encephalitis virus/VEEV spike proteins E1 and E2. Residues 174–194 (YAIIGSSVIFVLVVALLALVL) traverse the membrane as a helical segment. Topologically, residues 195–345 (HHQRKRNNLM…SEPSQGTEEV (151 aa)) are cytoplasmic. 2 short sequence motifs (involved in ITCH interaction) span residues 256-259 (PPSY) and 275-278 (PPPY). The tract at residues 270–345 (WYDLPPPPYS…SEPSQGTEEV (76 aa)) is disordered. Positions 295–313 (SRSGSANSASSQAASSLLS) are enriched in low complexity.

Belongs to the LDLR family. As to quaternary structure, interacts with APP precursor C-terminus. Interacts directly with ITCH; this interaction promotes ITCH auto-ubiquitination leading to its degradation. Interacts directly with NEDD4; this interaction promotes NEDD4 auto-ubiquitination. Interacts directly with NEDD4L. In terms of assembly, (Microbial infection) Interacts (via domain LDL-receptor class A 1) with Venezuelan equine encephalitis virus/VEEV spike proteins E1 and E2. As to expression, expressed at high levels in brain, lung, skeletal muscle, and pancreas. Expressed at moderate levels in heart, placenta, and kidney but not detected in the liver.

It localises to the cell membrane. Functionally, may influence APP processing, resulting in a decrease in sAPP-alpha production and increased amyloidogenic P3 peptide production. May regulate ITCH and NEDD4 E3 ligase activity and degradation. (Microbial infection) Acts as a receptor for Venezuelan equine encephalitis virus. The chain is Low-density lipoprotein receptor class A domain-containing protein 3 from Homo sapiens (Human).